The primary structure comprises 313 residues: ADP,ATP carrier protein (313 aa).

Solcar repeat units lie at residues 11–104 (PPFV…FKKM), 116–208 (KWMA…IKPV), and 216–302 (NNFL…LQVL). 5 helical membrane passes run 13 to 40 (FVAD…IKLL), 81 to 105 (TANV…KKMF), 114 to 134 (YWKW…TSLL), 184 to 205 (FGPS…YDSI), and 219 to 239 (LASF…SYPL). ADP-binding residues include Arg86 and Arg98. Arg243 serves as a coordination point for ADP. Residues 243–248 (RRRMMM) are important for transport activity. Positions 243 to 248 (RRRMMM) match the Nucleotide carrier signature motif motif. Residues 279 to 299 (AGANILRGVAGAGVLSIYDQL) form a helical membrane-spanning segment.

This sequence belongs to the mitochondrial carrier (TC 2.A.29) family. Monomer.

The protein localises to the mitochondrion inner membrane. The enzyme catalyses ADP(in) + ATP(out) = ADP(out) + ATP(in). Its activity is regulated as follows. The matrix-open state (m-state) is inhibited by the membrane-permeable bongkrekic acid (BKA). The cytoplasmic-open state (c-state) is inhibited by the membrane-impermeable toxic inhibitor carboxyatractyloside (CATR). ADP:ATP antiporter that mediates import of ADP into the mitochondrial matrix for ATP synthesis, and export of ATP out to fuel the cell. Cycles between the cytoplasmic-open state (c-state) and the matrix-open state (m-state): operates by the alternating access mechanism with a single substrate-binding site intermittently exposed to either the cytosolic (c-state) or matrix (m-state) side of the inner mitochondrial membrane. This is ADP,ATP carrier protein (aac) from Neurospora crassa (strain ATCC 24698 / 74-OR23-1A / CBS 708.71 / DSM 1257 / FGSC 987).